A 127-amino-acid chain; its full sequence is UPF0166 protein PH1503 (127 aa).

It belongs to the UPF0166 family.

This Pyrococcus horikoshii (strain ATCC 700860 / DSM 12428 / JCM 9974 / NBRC 100139 / OT-3) protein is UPF0166 protein PH1503.